We begin with the raw amino-acid sequence, 338 residues long: Glyceraldehyde-3-phosphate dehydrogenase (338 aa).

Residues 11–12 (TI) and Gly109 contribute to the NAD(+) site. A D-glyceraldehyde 3-phosphate-binding site is contributed by 138-140 (SCN). Catalysis depends on Cys139, which acts as the Nucleophile. Arg167 contacts NAD(+). D-glyceraldehyde 3-phosphate is bound by residues Thr169 and 192-193 (HA). Gln299 is an NAD(+) binding site.

It belongs to the glyceraldehyde-3-phosphate dehydrogenase family. In terms of assembly, homotetramer.

The protein resides in the cytoplasm. It carries out the reaction D-glyceraldehyde 3-phosphate + phosphate + NADP(+) = (2R)-3-phospho-glyceroyl phosphate + NADPH + H(+). The enzyme catalyses D-glyceraldehyde 3-phosphate + phosphate + NAD(+) = (2R)-3-phospho-glyceroyl phosphate + NADH + H(+). The protein operates within carbohydrate degradation; glycolysis; pyruvate from D-glyceraldehyde 3-phosphate: step 1/5. This is Glyceraldehyde-3-phosphate dehydrogenase from Thermoplasma volcanium (strain ATCC 51530 / DSM 4299 / JCM 9571 / NBRC 15438 / GSS1).